Reading from the N-terminus, the 359-residue chain is Chorismate synthase (359 aa).

R47 serves as a coordination point for NADP(+). FMN-binding positions include 123–125 (RSS), G283, 298–302 (KPTSS), and R326.

Belongs to the chorismate synthase family. Homotetramer. It depends on FMNH2 as a cofactor.

The enzyme catalyses 5-O-(1-carboxyvinyl)-3-phosphoshikimate = chorismate + phosphate. It functions in the pathway metabolic intermediate biosynthesis; chorismate biosynthesis; chorismate from D-erythrose 4-phosphate and phosphoenolpyruvate: step 7/7. Its function is as follows. Catalyzes the anti-1,4-elimination of the C-3 phosphate and the C-6 proR hydrogen from 5-enolpyruvylshikimate-3-phosphate (EPSP) to yield chorismate, which is the branch point compound that serves as the starting substrate for the three terminal pathways of aromatic amino acid biosynthesis. This reaction introduces a second double bond into the aromatic ring system. This Chlamydia pneumoniae (Chlamydophila pneumoniae) protein is Chorismate synthase.